Here is a 374-residue protein sequence, read N- to C-terminus: Succinyl-diaminopimelate desuccinylase (374 aa).

A Zn(2+)-binding site is contributed by H66. D68 is a catalytic residue. Residue D99 coordinates Zn(2+). The active-site Proton acceptor is E133. E134, E162, and H348 together coordinate Zn(2+).

This sequence belongs to the peptidase M20A family. DapE subfamily. As to quaternary structure, homodimer. The cofactor is Zn(2+). Co(2+) is required as a cofactor.

It carries out the reaction N-succinyl-(2S,6S)-2,6-diaminopimelate + H2O = (2S,6S)-2,6-diaminopimelate + succinate. The protein operates within amino-acid biosynthesis; L-lysine biosynthesis via DAP pathway; LL-2,6-diaminopimelate from (S)-tetrahydrodipicolinate (succinylase route): step 3/3. Its function is as follows. Catalyzes the hydrolysis of N-succinyl-L,L-diaminopimelic acid (SDAP), forming succinate and LL-2,6-diaminopimelate (DAP), an intermediate involved in the bacterial biosynthesis of lysine and meso-diaminopimelic acid, an essential component of bacterial cell walls. The chain is Succinyl-diaminopimelate desuccinylase from Coxiella burnetii (strain RSA 331 / Henzerling II).